The primary structure comprises 187 residues: Elongation factor P (187 aa).

This sequence belongs to the elongation factor P family.

Its subcellular location is the cytoplasm. It participates in protein biosynthesis; polypeptide chain elongation. Functionally, involved in peptide bond synthesis. Stimulates efficient translation and peptide-bond synthesis on native or reconstituted 70S ribosomes in vitro. Probably functions indirectly by altering the affinity of the ribosome for aminoacyl-tRNA, thus increasing their reactivity as acceptors for peptidyl transferase. The protein is Elongation factor P of Rhodospirillum rubrum (strain ATCC 11170 / ATH 1.1.1 / DSM 467 / LMG 4362 / NCIMB 8255 / S1).